The sequence spans 104 residues: Small ribosomal subunit protein uS10 (104 aa).

Belongs to the universal ribosomal protein uS10 family. As to quaternary structure, part of the 30S ribosomal subunit.

Its function is as follows. Involved in the binding of tRNA to the ribosomes. The polypeptide is Small ribosomal subunit protein uS10 (Alkaliphilus oremlandii (strain OhILAs) (Clostridium oremlandii (strain OhILAs))).